A 757-amino-acid polypeptide reads, in one-letter code: NAD(P)H-quinone oxidoreductase subunit 5, chloroplastic (757 aa).

17 helical membrane-spanning segments follow: residues 9–29 (WIIP…LLLV), 40–60 (WAFP…DLSV), 89–109 (IDPL…MVLI), 122–139 (LRFF…LGLV), 147–167 (IYIF…FWFT), 185–205 (GDFG…SFEF), 219–239 (NGVN…GAVA), 258–278 (TPIS…FLVA), 280–300 (LLPL…IGVI), 327–347 (LGYI…FHLI), 354–374 (ALLF…VGYS), 396–416 (MTFL…CFWS), 425–445 (WLYS…TAFY), 544–564 (LLPL…GIPF), 607–627 (SIAY…YLFF), 692–712 (GIMN…KYLG), and 718–738 (SYLF…IFFF).

The protein belongs to the complex I subunit 5 family. As to quaternary structure, NDH is composed of at least 16 different subunits, 5 of which are encoded in the nucleus.

It localises to the plastid. The protein resides in the chloroplast thylakoid membrane. It catalyses the reaction a plastoquinone + NADH + (n+1) H(+)(in) = a plastoquinol + NAD(+) + n H(+)(out). The enzyme catalyses a plastoquinone + NADPH + (n+1) H(+)(in) = a plastoquinol + NADP(+) + n H(+)(out). In terms of biological role, NDH shuttles electrons from NAD(P)H:plastoquinone, via FMN and iron-sulfur (Fe-S) centers, to quinones in the photosynthetic chain and possibly in a chloroplast respiratory chain. The immediate electron acceptor for the enzyme in this species is believed to be plastoquinone. Couples the redox reaction to proton translocation, and thus conserves the redox energy in a proton gradient. This Drimys granadensis protein is NAD(P)H-quinone oxidoreductase subunit 5, chloroplastic (ndhF).